Consider the following 134-residue polypeptide: ATP synthase epsilon chain (134 aa).

Belongs to the ATPase epsilon chain family. As to quaternary structure, F-type ATPases have 2 components, CF(1) - the catalytic core - and CF(0) - the membrane proton channel. CF(1) has five subunits: alpha(3), beta(3), gamma(1), delta(1), epsilon(1). CF(0) has three main subunits: a, b and c.

It is found in the cell membrane. Functionally, produces ATP from ADP in the presence of a proton gradient across the membrane. This chain is ATP synthase epsilon chain, found in Alkaliphilus oremlandii (strain OhILAs) (Clostridium oremlandii (strain OhILAs)).